Reading from the N-terminus, the 237-residue chain is F-box only protein 50 (237 aa).

One can recognise an FBA domain in the interval 31 to 231 (VFETKPFERN…VTDSSVIVKA (201 aa)). The interval 40–82 (NLLQNPSPYGVNHTVPPPEPHRSGIPPPSDRPPQLEPEGNFSG) is disordered. A compositionally biased stretch (pro residues) spans 64-74 (IPPPSDRPPQL).

As to expression, expressed in nonspecific cytotoxic cells (NCC).

The protein localises to the cytoplasm. May promote cell proliferation. In Danio rerio (Zebrafish), this protein is F-box only protein 50 (nccrp1).